The primary structure comprises 879 residues: Alanine--tRNA ligase (879 aa).

Residues 426-449 (KQKERARNARGNMDGESWKEDPLS) form a disordered region. Residues His-566, His-570, Cys-668, and His-672 each coordinate Zn(2+).

The protein belongs to the class-II aminoacyl-tRNA synthetase family. The cofactor is Zn(2+).

Its subcellular location is the cytoplasm. It carries out the reaction tRNA(Ala) + L-alanine + ATP = L-alanyl-tRNA(Ala) + AMP + diphosphate. Functionally, catalyzes the attachment of alanine to tRNA(Ala) in a two-step reaction: alanine is first activated by ATP to form Ala-AMP and then transferred to the acceptor end of tRNA(Ala). Also edits incorrectly charged Ser-tRNA(Ala) and Gly-tRNA(Ala) via its editing domain. This chain is Alanine--tRNA ligase, found in Clostridioides difficile (strain 630) (Peptoclostridium difficile).